The chain runs to 347 residues: Haptoglobin (347 aa).

An N-terminal signal peptide occupies residues 1-18 (MRALGAVVTLLLWGQLFA). Residues 31-88 (DSCPKPPEIANGYVEHLVRYRCRQFYRLRAEGDGVYTLNDEKQWMNTVAGEKLPECEA) enclose the Sushi domain. 4 disulfide bridges follow: cysteine 52–cysteine 86, cysteine 90–cysteine 207, cysteine 250–cysteine 281, and cysteine 292–cysteine 322. The 243-residue stretch at 103-345 (IIGGSMDAKG…LKDWVQETMA (243 aa)) folds into the Peptidase S1 domain. Asparagine 148, asparagine 182, and asparagine 264 each carry an N-linked (GlcNAc...) asparagine glycan. The interaction with CD163 stretch occupies residues 259-264 (VPEKKN).

This sequence belongs to the peptidase S1 family. In terms of assembly, tetramer of two alpha and two beta chains; disulfide-linked. The hemoglobin/haptoglobin complex is composed of a haptoglobin dimer bound to two hemoglobin alpha-beta dimers. Interacts with CD163. Interacts with ERGIC3. In terms of tissue distribution, expressed by the liver and secreted in plasma.

The protein localises to the secreted. Its function is as follows. As a result of hemolysis, hemoglobin is found to accumulate in the kidney and is secreted in the urine. Haptoglobin captures, and combines with free plasma hemoglobin to allow hepatic recycling of heme iron and to prevent kidney damage. Haptoglobin also acts as an antioxidant, has antibacterial activity and plays a role in modulating many aspects of the acute phase response. Hemoglobin/haptoglobin complexes are rapidly cleared by the macrophage CD163 scavenger receptor expressed on the surface of liver Kupfer cells through an endocytic lysosomal degradation pathway. The sequence is that of Haptoglobin (Hp) from Mus caroli (Ryukyu mouse).